Here is a 449-residue protein sequence, read N- to C-terminus: 23S rRNA (uracil(1939)-C(5))-methyltransferase RlmD (449 aa).

The TRAM domain maps to Ser12–Lys70. Residues Cys83, Cys89, Cys92, and Cys170 each coordinate [4Fe-4S] cluster. S-adenosyl-L-methionine is bound by residues Gln282, Phe311, Asn316, Glu332, Asp359, and Asp379. Residue Cys405 is the Nucleophile of the active site.

The protein belongs to the class I-like SAM-binding methyltransferase superfamily. RNA M5U methyltransferase family. RlmD subfamily.

The enzyme catalyses uridine(1939) in 23S rRNA + S-adenosyl-L-methionine = 5-methyluridine(1939) in 23S rRNA + S-adenosyl-L-homocysteine + H(+). Its function is as follows. Catalyzes the formation of 5-methyl-uridine at position 1939 (m5U1939) in 23S rRNA. The polypeptide is 23S rRNA (uracil(1939)-C(5))-methyltransferase RlmD (Shewanella sp. (strain MR-7)).